Consider the following 431-residue polypeptide: Glutamate-1-semialdehyde 2,1-aminomutase (431 aa).

At lysine 265 the chain carries N6-(pyridoxal phosphate)lysine.

This sequence belongs to the class-III pyridoxal-phosphate-dependent aminotransferase family. HemL subfamily. In terms of assembly, homodimer. The cofactor is pyridoxal 5'-phosphate.

The protein localises to the cytoplasm. The catalysed reaction is (S)-4-amino-5-oxopentanoate = 5-aminolevulinate. It functions in the pathway porphyrin-containing compound metabolism; protoporphyrin-IX biosynthesis; 5-aminolevulinate from L-glutamyl-tRNA(Glu): step 2/2. This is Glutamate-1-semialdehyde 2,1-aminomutase from Aliivibrio salmonicida (strain LFI1238) (Vibrio salmonicida (strain LFI1238)).